The following is a 78-amino-acid chain: Small ribosomal subunit protein bS18 (78 aa).

The protein belongs to the bacterial ribosomal protein bS18 family. Part of the 30S ribosomal subunit. Forms a tight heterodimer with protein bS6.

Its function is as follows. Binds as a heterodimer with protein bS6 to the central domain of the 16S rRNA, where it helps stabilize the platform of the 30S subunit. The chain is Small ribosomal subunit protein bS18 from Lactobacillus delbrueckii subsp. bulgaricus (strain ATCC BAA-365 / Lb-18).